A 144-amino-acid chain; its full sequence is Large ribosomal subunit protein uL15 (144 aa).

Positions 1–58 are disordered; sequence MKLNNLSPAPGSKHAEKRVGRGIGSGLGKTGGRGHKGQKSRSGGSVKPGFEGGQMPLQ. Over residues 21–31 the composition is skewed to gly residues; sequence RGIGSGLGKTG.

It belongs to the universal ribosomal protein uL15 family. Part of the 50S ribosomal subunit.

In terms of biological role, binds to the 23S rRNA. This Chromohalobacter salexigens (strain ATCC BAA-138 / DSM 3043 / CIP 106854 / NCIMB 13768 / 1H11) protein is Large ribosomal subunit protein uL15.